The following is a 228-amino-acid chain: uncharacterized protein (228 aa).

Positions 7 to 228 constitute an ABC transporter domain; sequence VEVHHLKKSV…LVNGQLQEEA (222 aa). An ATP-binding site is contributed by 43–50; the sequence is GESGSGKS.

Belongs to the ABC transporter superfamily.

This is an uncharacterized protein from Escherichia coli O157:H7.